Here is a 707-residue protein sequence, read N- to C-terminus: tRNA 5-methylaminomethyl-2-thiouridine biosynthesis bifunctional protein MnmC (707 aa).

Residues 1 to 264 form a tRNA (mnm(5)s(2)U34)-methyltransferase region; it reads MTKKLEHEYI…KREMLFGTFE (264 aa). Residues 312-707 form an FAD-dependent cmnm(5)s(2)U34 oxidoreductase region; sequence IGGGLAGAHA…LFRDLTRNRI (396 aa).

The protein in the N-terminal section; belongs to the methyltransferase superfamily. tRNA (mnm(5)s(2)U34)-methyltransferase family. This sequence in the C-terminal section; belongs to the DAO family. FAD serves as cofactor.

The protein resides in the cytoplasm. The enzyme catalyses 5-aminomethyl-2-thiouridine(34) in tRNA + S-adenosyl-L-methionine = 5-methylaminomethyl-2-thiouridine(34) in tRNA + S-adenosyl-L-homocysteine + H(+). Functionally, catalyzes the last two steps in the biosynthesis of 5-methylaminomethyl-2-thiouridine (mnm(5)s(2)U) at the wobble position (U34) in tRNA. Catalyzes the FAD-dependent demodification of cmnm(5)s(2)U34 to nm(5)s(2)U34, followed by the transfer of a methyl group from S-adenosyl-L-methionine to nm(5)s(2)U34, to form mnm(5)s(2)U34. The protein is tRNA 5-methylaminomethyl-2-thiouridine biosynthesis bifunctional protein MnmC of Saccharophagus degradans (strain 2-40 / ATCC 43961 / DSM 17024).